Consider the following 218-residue polypeptide: Dual specificity protein phosphatase TpbA (218 aa).

Positions 1-28 (MHRSPLAWLRLLLAAVLGAFLLGGPLHA) are cleaved as a signal peptide. A Tyrosine-protein phosphatase domain is found at 44-188 (DPSINLYRMS…YVRGADVDGL (145 aa)). D105 functions as the Proton donor/acceptor in the catalytic mechanism. The active-site Phosphocysteine intermediate is the C132.

The protein belongs to the protein-tyrosine phosphatase family. Monomer in solution.

Its subcellular location is the periplasm. It catalyses the reaction O-phospho-L-tyrosyl-[protein] + H2O = L-tyrosyl-[protein] + phosphate. The enzyme catalyses O-phospho-L-threonyl-[protein] + H2O = L-threonyl-[protein] + phosphate. The catalysed reaction is O-phospho-L-seryl-[protein] + H2O = L-seryl-[protein] + phosphate. With respect to regulation, the phosphatase activity is completely inhibited by trisodium orthovanadate, a tyrosine phosphatase specific inhibitor. Phosphatase that regulates diverse phenotypes in P.aeruginosa via regulation of the concentration of cellular c-di-GMP. Acts by dephosphorylating the membrane-anchored diguanylate cyclase TpbB at tyrosine and serine/threonine sites, leading to inactivation of TpbB and reduced c-di-GMP production. The reduced cellular c-di-GMP concentration leads to reduced adhesin expression, reduced extracellular polysaccharide (EPS) production, pellicule production, cell aggregation and biofilm formation, and enhanced swimming and swarming. It affects colony morphology and controls rugose colony formation. TpbA also acts as a positive regulator of extracellular DNA (eDNA, a major component of the biofilm matrix) and cell lysis by reducing c-di-GMP concentrations. In vitro shows phosphatase activity toward p-nitrophenyl phosphate (pNPP), tyrosine phosphopeptides and a threonine phosphopeptide. Does not have phosphodiesterases (PDE) activity, and cannot degrade c-di-GMP. The chain is Dual specificity protein phosphatase TpbA from Pseudomonas aeruginosa (strain UCBPP-PA14).